The sequence spans 125 residues: Holo-[acyl-carrier-protein] synthase (125 aa).

2 residues coordinate Mg(2+): Asp-8 and Glu-57.

This sequence belongs to the P-Pant transferase superfamily. AcpS family. Requires Mg(2+) as cofactor.

The protein resides in the cytoplasm. The enzyme catalyses apo-[ACP] + CoA = holo-[ACP] + adenosine 3',5'-bisphosphate + H(+). Its function is as follows. Transfers the 4'-phosphopantetheine moiety from coenzyme A to a Ser of acyl-carrier-protein. This chain is Holo-[acyl-carrier-protein] synthase, found in Natranaerobius thermophilus (strain ATCC BAA-1301 / DSM 18059 / JW/NM-WN-LF).